A 422-amino-acid polypeptide reads, in one-letter code: Dihydroorotase (422 aa).

Zn(2+) contacts are provided by His59 and His61. Residues 61 to 63 (HFR) and Asn93 each bind substrate. Residues Asp150, His177, and His230 each coordinate Zn(2+). Asn276 is a binding site for substrate. Asp303 is a Zn(2+) binding site. Asp303 is an active-site residue. His307 is a substrate binding site.

It belongs to the metallo-dependent hydrolases superfamily. DHOase family. Class I DHOase subfamily. Zn(2+) serves as cofactor.

The catalysed reaction is (S)-dihydroorotate + H2O = N-carbamoyl-L-aspartate + H(+). Its pathway is pyrimidine metabolism; UMP biosynthesis via de novo pathway; (S)-dihydroorotate from bicarbonate: step 3/3. In terms of biological role, catalyzes the reversible cyclization of carbamoyl aspartate to dihydroorotate. The protein is Dihydroorotase of Streptococcus pneumoniae serotype 4 (strain ATCC BAA-334 / TIGR4).